The primary structure comprises 48 residues: Protein TUNAR (48 aa).

A disordered region spans residues 1–20 (MVITSENDEDRGGQEKESKE). Positions 10 to 20 (DRGGQEKESKE) are enriched in basic and acidic residues. The chain crosses the membrane as a helical span at residues 24–44 (LAMLGIIGTILNLIVIIFVYI).

In terms of assembly, interacts with ATPase ATP2A2/SERCA2. Interacts with ATPase ATP2A3/SERCA3; the interaction occurs at low levels in low glucose conditions and is increased by high glucose levels. In terms of tissue distribution, highly expressed in pancreatic islets where it is enriched in the insulin-producing beta cells.

It localises to the endoplasmic reticulum membrane. It is found in the extracellular vesicle membrane. In terms of biological role, in neurons, plays a role in the regulation of intracellular Ca(2+), possibly by acting as an activator of ATP2A2/SERCA2, thus increasing the efficiency with which Ca(2+) is removed from the cytoplasm. Inhibits differentiation of embryonic stem cells into neurons and inhibits neurite outgrowth, likely as a result of its role in intracellular Ca(2+) regulation. In pancreatic beta cells, lowers Ca(2+) levels in the endoplasmic reticulum and enhances glucose-stimulated insulin secretion. This Homo sapiens (Human) protein is Protein TUNAR.